The chain runs to 476 residues: Exodeoxyribonuclease 7 large subunit (476 aa).

This sequence belongs to the XseA family. In terms of assembly, heterooligomer composed of large and small subunits.

It localises to the cytoplasm. It carries out the reaction Exonucleolytic cleavage in either 5'- to 3'- or 3'- to 5'-direction to yield nucleoside 5'-phosphates.. Functionally, bidirectionally degrades single-stranded DNA into large acid-insoluble oligonucleotides, which are then degraded further into small acid-soluble oligonucleotides. This chain is Exodeoxyribonuclease 7 large subunit, found in Bartonella tribocorum (strain CIP 105476 / IBS 506).